A 177-amino-acid polypeptide reads, in one-letter code: Small ribosomal subunit protein uS5 (177 aa).

Residues 19-82 (WQERVVQIRR…ADGKKQLVEV (64 aa)) form the S5 DRBM domain.

The protein belongs to the universal ribosomal protein uS5 family. Part of the 30S ribosomal subunit. Contacts proteins S4 and S8.

With S4 and S12 plays an important role in translational accuracy. In terms of biological role, located at the back of the 30S subunit body where it stabilizes the conformation of the head with respect to the body. In Acaryochloris marina (strain MBIC 11017), this protein is Small ribosomal subunit protein uS5.